A 154-amino-acid polypeptide reads, in one-letter code: Large ribosomal subunit protein uL23 (154 aa).

The protein belongs to the universal ribosomal protein uL23 family.

In terms of biological role, this protein binds to a specific region on the 26S rRNA. The polypeptide is Large ribosomal subunit protein uL23 (RPL23A) (Fritillaria agrestis (Stinkbells)).